The following is a 544-amino-acid chain: Chaperonin GroEL (544 aa).

ATP is bound by residues 30 to 33 (TLGP), lysine 51, 87 to 91 (DGTTT), glycine 415, and aspartate 495.

The protein belongs to the chaperonin (HSP60) family. Forms a cylinder of 14 subunits composed of two heptameric rings stacked back-to-back. Interacts with the co-chaperonin GroES.

It localises to the cytoplasm. It catalyses the reaction ATP + H2O + a folded polypeptide = ADP + phosphate + an unfolded polypeptide.. In terms of biological role, together with its co-chaperonin GroES, plays an essential role in assisting protein folding. The GroEL-GroES system forms a nano-cage that allows encapsulation of the non-native substrate proteins and provides a physical environment optimized to promote and accelerate protein folding. The chain is Chaperonin GroEL from Agrobacterium fabrum (strain C58 / ATCC 33970) (Agrobacterium tumefaciens (strain C58)).